A 56-amino-acid polypeptide reads, in one-letter code: Small ribosomal subunit protein bS21 (56 aa).

It belongs to the bacterial ribosomal protein bS21 family.

The chain is Small ribosomal subunit protein bS21 from Synechococcus sp. (strain WH7803).